The following is a 119-amino-acid chain: MVARVWSLMRFLIKGSVAGGAVYLVYDQELLGPSDKSEAALRKAEEVVPPAMYQFSQYVCQQTGLEMPQLPTPPKIKFPNFRDSWNSGIISVMSALSVAPSKAREYSKEGWEYLKEHSK.

The Mitochondrial matrix segment spans residues 1–7; it reads MVARVWS. Residues 8–26 form a helical membrane-spanning segment; sequence LMRFLIKGSVAGGAVYLVY. At 27-119 the chain is on the mitochondrial intermembrane side; the sequence is DQELLGPSDK…GWEYLKEHSK (93 aa).

It belongs to the MICOS complex subunit Mic13 family. As to quaternary structure, component of the mitochondrial contact site and cristae organizing system (MICOS) complex, composed of at least MICOS10/MIC10, CHCHD3/MIC19, CHCHD6/MIC25, APOO/MIC26, MICOS13/MIC13, APOOL/MIC27 and IMMT/MIC60. The MICOS complex associates with mitochondrial outer membrane proteins SAMM50, MTX1 and MTX2 (together described as components of the mitochondrial outer membrane sorting assembly machinery (SAM) complex) and DNAJC11, mitochondrial inner membrane protein TMEM11 and with HSPA9. The MICOS and SAM complexes together with DNAJC11 are part of a large protein complex spanning both membranes termed the mitochondrial intermembrane space bridging (MIB) complex.

The protein resides in the mitochondrion inner membrane. Component of the MICOS complex, a large protein complex of the mitochondrial inner membrane that plays crucial roles in the maintenance of crista junctions, inner membrane architecture, and formation of contact sites to the outer membrane. Constituent of mature MICOS complex, it is required for the formation of cristae junction (CJ) and maintenance of cristae morphology. Required for the incorporation of MICOS10/MIC10 into the MICOS complex. This is MICOS complex subunit MIC13 (Micos13) from Mus musculus (Mouse).